An 89-amino-acid chain; its full sequence is Small ribosomal subunit protein uS14A (89 aa).

The protein belongs to the universal ribosomal protein uS14 family. In terms of assembly, part of the 30S ribosomal subunit. Contacts proteins S3 and S10.

Its function is as follows. Binds 16S rRNA, required for the assembly of 30S particles and may also be responsible for determining the conformation of the 16S rRNA at the A site. The polypeptide is Small ribosomal subunit protein uS14A (Staphylococcus haemolyticus (strain JCSC1435)).